Here is a 598-residue protein sequence, read N- to C-terminus: NADH-quinone oxidoreductase subunit C/D (598 aa).

Residues 1 to 188 (MTDSTTHDAL…DPFVLTKQKE (188 aa)) form an NADH dehydrogenase I subunit C region. Positions 212-598 (DFMFLNLGPN…IDFVMSDVDR (387 aa)) are NADH dehydrogenase I subunit D.

This sequence in the N-terminal section; belongs to the complex I 30 kDa subunit family. It in the C-terminal section; belongs to the complex I 49 kDa subunit family. As to quaternary structure, NDH-1 is composed of 13 different subunits. Subunits NuoB, CD, E, F, and G constitute the peripheral sector of the complex.

Its subcellular location is the cell inner membrane. It carries out the reaction a quinone + NADH + 5 H(+)(in) = a quinol + NAD(+) + 4 H(+)(out). In terms of biological role, NDH-1 shuttles electrons from NADH, via FMN and iron-sulfur (Fe-S) centers, to quinones in the respiratory chain. The immediate electron acceptor for the enzyme in this species is believed to be ubiquinone. Couples the redox reaction to proton translocation (for every two electrons transferred, four hydrogen ions are translocated across the cytoplasmic membrane), and thus conserves the redox energy in a proton gradient. This is NADH-quinone oxidoreductase subunit C/D from Serratia proteamaculans (strain 568).